The primary structure comprises 274 residues: Cytochrome b-c1 complex subunit Rieske, mitochondrial (274 aa).

At Ser-79–Arg-110 the chain is on the mitochondrial matrix side. A helical membrane pass occupies residues Lys-111–Val-137. Over Ser-138–Gly-274 the chain is Mitochondrial intermembrane. Residues Glu-187 to Val-272 enclose the Rieske domain. [2Fe-2S] cluster is bound by residues Cys-217, His-219, Cys-236, His-239, and Ser-241. A disulfide bond links Cys-222 and Cys-238.

This sequence belongs to the Rieske iron-sulfur protein family. As to quaternary structure, component of the ubiquinol-cytochrome c oxidoreductase (cytochrome b-c1 complex, complex III, CIII), a multisubunit enzyme composed of 11 subunits. The complex is composed of 3 respiratory subunits cytochrome b, cytochrome c1 and Rieske protein UQCRFS1, 2 core protein subunits UQCRC1/QCR1 and UQCRC2/QCR2, and 6 low-molecular weight protein subunits UQCRH/QCR6, UQCRB/QCR7, UQCRQ/QCR8, UQCR10/QCR9, UQCR11/QCR10 and subunit 9, the cleavage product of Rieske protein UQCRFS1. The complex exists as an obligatory dimer and forms supercomplexes (SCs) in the inner mitochondrial membrane with NADH-ubiquinone oxidoreductase (complex I, CI) and cytochrome c oxidase (complex IV, CIV), resulting in different assemblies (supercomplex SCI(1)III(2)IV(1) and megacomplex MCI(2)III(2)IV(2)). Incorporation of the Rieske protein UQCRFS1 is the penultimate step in complex III assembly. Interacts with TTC19, which is involved in the clearance of UQCRFS1 fragments. In terms of assembly, component of the ubiquinol-cytochrome c oxidoreductase (cytochrome b-c1 complex, complex III, CIII). Subunit 9 corresponds to the mitochondrial targeting sequence (MTS) of Rieske protein UQCRFS1. It is retained after processing and incorporated inside complex III, where it remains bound to the complex and localizes between the 2 core subunits UQCRC1/QCR1 and UQCRC2/QCR2. Requires [2Fe-2S] cluster as cofactor. Proteolytic processing is necessary for the correct insertion of UQCRFS1 in the complex III dimer. Several fragments are generated during UQCRFS1 insertion, most probably due to the endogenous matrix-processing peptidase (MPP) activity of the 2 core protein subunits UQCRC1/QCR1 and UQCRC2/QCR2, which are homologous to the 2 mitochondrial-processing peptidase (MPP) subunits beta-MPP and alpha-MPP respectively. The action of the protease is also necessary for the clearance of the UQCRFS1 fragments.

It is found in the mitochondrion inner membrane. The enzyme catalyses a quinol + 2 Fe(III)-[cytochrome c](out) = a quinone + 2 Fe(II)-[cytochrome c](out) + 2 H(+)(out). In terms of biological role, component of the ubiquinol-cytochrome c oxidoreductase, a multisubunit transmembrane complex that is part of the mitochondrial electron transport chain which drives oxidative phosphorylation. The respiratory chain contains 3 multisubunit complexes succinate dehydrogenase (complex II, CII), ubiquinol-cytochrome c oxidoreductase (cytochrome b-c1 complex, complex III, CIII) and cytochrome c oxidase (complex IV, CIV), that cooperate to transfer electrons derived from NADH and succinate to molecular oxygen, creating an electrochemical gradient over the inner membrane that drives transmembrane transport and the ATP synthase. The cytochrome b-c1 complex catalyzes electron transfer from ubiquinol to cytochrome c, linking this redox reaction to translocation of protons across the mitochondrial inner membrane, with protons being carried across the membrane as hydrogens on the quinol. In the process called Q cycle, 2 protons are consumed from the matrix, 4 protons are released into the intermembrane space and 2 electrons are passed to cytochrome c. The Rieske protein is a catalytic core subunit containing a [2Fe-2S] iron-sulfur cluster. It cycles between 2 conformational states during catalysis to transfer electrons from the quinol bound in the Q(0) site in cytochrome b to cytochrome c1. Incorporation of UQCRFS1 is the penultimate step in complex III assembly. Functionally, component of the ubiquinol-cytochrome c oxidoreductase (cytochrome b-c1 complex, complex III, CIII). UQCRFS1 undergoes proteolytic processing once it is incorporated in the complex III dimer. One of the fragments, called subunit 9, corresponds to its mitochondrial targeting sequence (MTS). The proteolytic processing is necessary for the correct insertion of UQCRFS1 in the complex III dimer, but the persistence of UQCRFS1-derived fragments may prevent newly imported UQCRFS1 to be processed and assembled into complex III and is detrimental for the complex III structure and function. The protein is Cytochrome b-c1 complex subunit Rieske, mitochondrial of Mus musculus (Mouse).